Reading from the N-terminus, the 530-residue chain is Ubiquitin carboxyl-terminal hydrolase 17-like protein 5 (530 aa).

Positions 80-375 (AGLQNMGNTC…QAYVLFYIQK (296 aa)) constitute a USP domain. C89 functions as the Nucleophile in the catalytic mechanism. H334 acts as the Proton acceptor in catalysis. Composition is skewed to basic and acidic residues over residues 382 to 392 (SESVSRGREPR) and 398 to 412 (DTDR…KRDH). 2 disordered regions span residues 382-412 (SESV…KRDH) and 477-530 (NHHP…LVCQ). Positions 493–505 (TPTHQESMNTGTL) are enriched in polar residues. Over residues 510–524 (GRARRSKGKNKHSKR) the composition is skewed to basic residues.

Belongs to the peptidase C19 family. USP17 subfamily.

It localises to the nucleus. Its subcellular location is the endoplasmic reticulum. It catalyses the reaction Thiol-dependent hydrolysis of ester, thioester, amide, peptide and isopeptide bonds formed by the C-terminal Gly of ubiquitin (a 76-residue protein attached to proteins as an intracellular targeting signal).. Functionally, deubiquitinating enzyme that removes conjugated ubiquitin from specific proteins to regulate different cellular processes that may include cell proliferation, progression through the cell cycle, apoptosis, cell migration, and the cellular response to viral infection. This Homo sapiens (Human) protein is Ubiquitin carboxyl-terminal hydrolase 17-like protein 5 (USP17L5).